The following is a 314-amino-acid chain: Ribosomal RNA small subunit methyltransferase H (314 aa).

Residues 35-37 (GGH), D55, F79, D101, and Q108 each bind S-adenosyl-L-methionine. A disordered region spans residues 276–296 (QGGQTLKPVGKKLMPSEAEVA).

Belongs to the methyltransferase superfamily. RsmH family.

Its subcellular location is the cytoplasm. It catalyses the reaction cytidine(1402) in 16S rRNA + S-adenosyl-L-methionine = N(4)-methylcytidine(1402) in 16S rRNA + S-adenosyl-L-homocysteine + H(+). Functionally, specifically methylates the N4 position of cytidine in position 1402 (C1402) of 16S rRNA. The chain is Ribosomal RNA small subunit methyltransferase H from Pectobacterium atrosepticum (strain SCRI 1043 / ATCC BAA-672) (Erwinia carotovora subsp. atroseptica).